We begin with the raw amino-acid sequence, 509 residues long: Leucine-rich repeat-containing protein 14 (509 aa).

One copy of the LRR 1; degenerate repeat lies at 111-146 (RQRLRLLDMTGMQEEGLEQNPDTMSLWSRTVTLAKA). An LRR 2; degenerate repeat occupies 210-234 (RLQCRDFRAEELSLRSTAGLLELLN). The stretch at 235–262 (PGSVRQIDLRFNNLGLSGLNVLLPHMAK) is one LRR 3; degenerate repeat. The stretch at 263 to 298 (FSHLQSLKLPYSNVDVRRLSPVMEEGLQSFASQLGQ) is one LRR 4; degenerate repeat. 5 LRR repeats span residues 299 to 323 (LGAL…LGGL), 324 to 355 (QRPL…SSLR), 356 to 374 (KLDL…PFLH), 380 to 407 (SGHL…ILCR), and 408 to 432 (CSWL…VLQN).

Belongs to the PRAME family. LRRC14 subfamily.

The protein localises to the cytoplasm. In Xenopus laevis (African clawed frog), this protein is Leucine-rich repeat-containing protein 14.